The primary structure comprises 59 residues: Small ribosomal subunit protein bS21 (59 aa).

Positions 40 to 59 (KPSVKRKKKSEAARKRKSFR) are disordered. Over residues 43-59 (VKRKKKSEAARKRKSFR) the composition is skewed to basic residues.

It belongs to the bacterial ribosomal protein bS21 family.

The protein is Small ribosomal subunit protein bS21 of Desulforamulus reducens (strain ATCC BAA-1160 / DSM 100696 / MI-1) (Desulfotomaculum reducens).